Here is a 286-residue protein sequence, read N- to C-terminus: Small ribosomal subunit protein uS3 (286 aa).

The KH type-2 domain occupies 39-107 (VREYLKKKLA…PVHVNIEEIR (69 aa)). The tract at residues 213–286 (QAGAGTAAPQ…KPGVNDAAAS (74 aa)) is disordered. Positions 241–262 (GRADARSDGKAGEKKGPRKSDN) are enriched in basic and acidic residues.

It belongs to the universal ribosomal protein uS3 family. In terms of assembly, part of the 30S ribosomal subunit. Forms a tight complex with proteins S10 and S14.

In terms of biological role, binds the lower part of the 30S subunit head. Binds mRNA in the 70S ribosome, positioning it for translation. The chain is Small ribosomal subunit protein uS3 from Nitrosospira multiformis (strain ATCC 25196 / NCIMB 11849 / C 71).